Consider the following 211-residue polypeptide: Riboflavin kinase (211 aa).

Positions 1–81 (MKCIDRRLIG…DLLRYFNILS (81 aa)) are H-T-H motif-like. Residues 82–211 (IRLSGRVVSG…DRVEIEIYLE (130 aa)) are riboflavin kinase. 91–96 (GLGEGA) serves as a coordination point for CDP. Mg(2+) is bound by residues threonine 120 and asparagine 122. Threonine 177 and glutamate 185 together coordinate FMN. 190-193 (FKLR) lines the CDP pocket.

It belongs to the archaeal riboflavin kinase family. Mg(2+) serves as cofactor.

It catalyses the reaction riboflavin + CTP = CDP + FMN + H(+). Its pathway is cofactor biosynthesis; FMN biosynthesis; FMN from riboflavin (CTP route): step 1/1. Functionally, catalyzes the CTP-dependent phosphorylation of riboflavin (vitamin B2) to form flavin mononucleotide (FMN). The protein is Riboflavin kinase (ribK) of Pyrobaculum islandicum (strain DSM 4184 / JCM 9189 / GEO3).